A 213-amino-acid chain; its full sequence is MRLRHKPWALDYMKEQSSIYIADPSTLKGNWSNEFKNENPIYIEVGSGKGAFITGMAKQYPEVNFVAIELFESVAVAIVQKMVEEPLANVRVLTVDAKDLRDFFEKGEVARVYLNFSDPWPKSRHAKRRLTYKTFLATYEDILPEKGQIHFKTDNRKLFESSLMTMSAYGMTFDWMSLDLHANEPENNVRTEYEERFSAMGQPIYRMEATYTK.

Glutamate 44, glutamate 69, aspartate 96, and aspartate 118 together coordinate S-adenosyl-L-methionine. The active site involves aspartate 118. Substrate contacts are provided by residues lysine 122, aspartate 154, and 191–194 (TEYE).

Belongs to the class I-like SAM-binding methyltransferase superfamily. TrmB family.

It catalyses the reaction guanosine(46) in tRNA + S-adenosyl-L-methionine = N(7)-methylguanosine(46) in tRNA + S-adenosyl-L-homocysteine. It functions in the pathway tRNA modification; N(7)-methylguanine-tRNA biosynthesis. Catalyzes the formation of N(7)-methylguanine at position 46 (m7G46) in tRNA. This is tRNA (guanine-N(7)-)-methyltransferase from Exiguobacterium sibiricum (strain DSM 17290 / CCUG 55495 / CIP 109462 / JCM 13490 / 255-15).